Here is a 451-residue protein sequence, read N- to C-terminus: Chromosomal replication initiator protein DnaA (451 aa).

The tract at residues 1 to 72 (MQSIEDIWQE…ANILQEITGR (72 aa)) is domain I, interacts with DnaA modulators. Positions 72 to 108 (RLFDVRFIDGEQEENFEYTVIKPNPALDEDGIEIGKH) are domain II. The segment at 109-325 (MLNPRYVFDT…GALIRVVAYS (217 aa)) is domain III, AAA+ region. 4 residues coordinate ATP: G153, G155, K156, and T157. Residues 326 to 451 (SLVNKDITAG…KNLRKAQNMF (126 aa)) form a domain IV, binds dsDNA region.

This sequence belongs to the DnaA family. Oligomerizes as a right-handed, spiral filament on DNA at oriC.

Its subcellular location is the cytoplasm. Functionally, plays an essential role in the initiation and regulation of chromosomal replication. ATP-DnaA binds to the origin of replication (oriC) to initiate formation of the DNA replication initiation complex once per cell cycle. Binds the DnaA box (a 9 base pair repeat at the origin) and separates the double-stranded (ds)DNA. Forms a right-handed helical filament on oriC DNA; dsDNA binds to the exterior of the filament while single-stranded (ss)DNA is stabiized in the filament's interior. The ATP-DnaA-oriC complex binds and stabilizes one strand of the AT-rich DNA unwinding element (DUE), permitting loading of DNA polymerase. After initiation quickly degrades to an ADP-DnaA complex that is not apt for DNA replication. Binds acidic phospholipids. This chain is Chromosomal replication initiator protein DnaA, found in Listeria monocytogenes serotype 4b (strain F2365).